The following is an 841-amino-acid chain: Alpha-glucan phosphorylase 2, cytosolic (841 aa).

Positions 1-24 (MANANGKAATSLPEKISAKANPEA) are disordered. Lys687 carries the post-translational modification N6-(pyridoxal phosphate)lysine.

Belongs to the glycogen phosphorylase family. Pyridoxal 5'-phosphate serves as cofactor.

Its subcellular location is the cytoplasm. It catalyses the reaction [(1-&gt;4)-alpha-D-glucosyl](n) + phosphate = [(1-&gt;4)-alpha-D-glucosyl](n-1) + alpha-D-glucose 1-phosphate. In terms of biological role, phosphorylase is an important allosteric enzyme in carbohydrate metabolism. Enzymes from different sources differ in their regulatory mechanisms and in their natural substrates. However, all known phosphorylases share catalytic and structural properties. This chain is Alpha-glucan phosphorylase 2, cytosolic (PHS2), found in Arabidopsis thaliana (Mouse-ear cress).